Reading from the N-terminus, the 407-residue chain is Shaggy-related protein kinase iota (407 aa).

Residues 1–19 (MASLPLGPQPHALAPPLQL) are compositionally biased toward low complexity. Residues 1 to 23 (MASLPLGPQPHALAPPLQLHDGD) are disordered. A2 bears the N-acetylalanine mark. Residues 70-354 (YMAERVVGTG…ALEACAHPFF (285 aa)) form the Protein kinase domain. Residues 76–84 (VGTGSFGIV) and K99 contribute to the ATP site. D195 serves as the catalytic Proton acceptor. Y230 carries the post-translational modification Phosphotyrosine.

It belongs to the protein kinase superfamily. CMGC Ser/Thr protein kinase family. GSK-3 subfamily. As to quaternary structure, binds to KIB1. Interacts with BSK6. In terms of processing, autophosphorylated mainly on threonine and serine residues.

The catalysed reaction is L-seryl-[protein] + ATP = O-phospho-L-seryl-[protein] + ADP + H(+). It catalyses the reaction L-threonyl-[protein] + ATP = O-phospho-L-threonyl-[protein] + ADP + H(+). In terms of biological role, phosphorylates BSK1, BSK3, BSK5, BSK6, BSK8 and BSK11 in vitro. May mediate extracellular signals to regulate transcription in differentiating cells. The sequence is that of Shaggy-related protein kinase iota (ASK9) from Arabidopsis thaliana (Mouse-ear cress).